A 565-amino-acid polypeptide reads, in one-letter code: Augmin complex subunit dgt3 (565 aa).

Coiled-coil stretches lie at residues 135–171 (ELQL…AKKA) and 212–241 (QDYD…IQFY).

Belongs to the HAUS3 family. Component of the augmin complex composed of dgt2, dgt3, dgt4, dgt5, dgt6, msd1, msd5 and wac. The complex interacts directly or indirectly with microtubules and is required for centrosome-independent generation of spindle microtubules.

It is found in the cytoplasm. The protein resides in the cytoskeleton. It localises to the spindle. In terms of biological role, as part of the augmin complex, plays a role in centrosome-independent generation of spindle microtubules. The complex is required for mitotic spindle assembly through its involvement in localizing gamma-tubulin to spindle microtubules. The polypeptide is Augmin complex subunit dgt3 (Drosophila melanogaster (Fruit fly)).